The sequence spans 198 residues: Adenylate kinase (198 aa).

An ATP-binding site is contributed by 10–15 (GAGKGT). The NMP stretch occupies residues 30–59 (STGDMLRAAVQAGSEVGKRAKAVMDAGELV). AMP-binding positions include threonine 31, arginine 36, 57–59 (ELV), 85–88 (GYPR), and glutamine 92. Residues 126–142 (KRAEDAKAAGQPVRKDD) form an LID region. Arginine 127 is a binding site for ATP. AMP-binding residues include arginine 139 and arginine 150. Alanine 178 is an ATP binding site.

It belongs to the adenylate kinase family. In terms of assembly, monomer.

It localises to the cytoplasm. The enzyme catalyses AMP + ATP = 2 ADP. It functions in the pathway purine metabolism; AMP biosynthesis via salvage pathway; AMP from ADP: step 1/1. Catalyzes the reversible transfer of the terminal phosphate group between ATP and AMP. Plays an important role in cellular energy homeostasis and in adenine nucleotide metabolism. This Mesorhizobium japonicum (strain LMG 29417 / CECT 9101 / MAFF 303099) (Mesorhizobium loti (strain MAFF 303099)) protein is Adenylate kinase.